A 465-amino-acid polypeptide reads, in one-letter code: Serine hydroxymethyltransferase (465 aa).

Residue lysine 241 is modified to N6-(pyridoxal phosphate)lysine.

Belongs to the SHMT family. Homotetramer. Pyridoxal 5'-phosphate serves as cofactor. In terms of tissue distribution, highest expression in the ovary and testis. 6- to 7-fold lower expression in hemocyte, silk gland, midgut and fat body.

The enzyme catalyses (6R)-5,10-methylene-5,6,7,8-tetrahydrofolate + glycine + H2O = (6S)-5,6,7,8-tetrahydrofolate + L-serine. The protein operates within one-carbon metabolism; tetrahydrofolate interconversion. Functionally, interconversion of serine and glycine. The sequence is that of Serine hydroxymethyltransferase (692975) from Bombyx mori (Silk moth).